The sequence spans 362 residues: Heat-inducible transcription repressor HrcA (362 aa).

The protein belongs to the HrcA family.

Negative regulator of class I heat shock genes (grpE-dnaK-dnaJ and groELS operons). Prevents heat-shock induction of these operons. This chain is Heat-inducible transcription repressor HrcA, found in Rhodopseudomonas palustris (strain BisB18).